Consider the following 78-residue polypeptide: TP53-regulated inhibitor of apoptosis 1-A (78 aa).

Residues 1–52 (MNSVGEECTDMKRDYDQCFNRWFAEKFLKGAGSGDPCTELFRRYRECVQKAI) are a coiled coil. One can recognise a CHCH domain in the interval 5 to 55 (GEECTDMKRDYDQCFNRWFAEKFLKGAGSGDPCTELFRRYRECVQKAIKDK). 2 consecutive short sequence motifs (cx9C motif) follow at residues 8–18 (CTDMKRDYDQC) and 37–47 (CTELFRRYREC). 2 disulfides stabilise this stretch: C8–C47 and C18–C37.

This sequence belongs to the TRIAP1/MDM35 family. Monomer. Forms a complex with prelid1 in the mitochondrion intermembrane space. Interacts with prelid3a.

It is found in the mitochondrion. It localises to the mitochondrion intermembrane space. The catalysed reaction is a 1,2-diacyl-sn-glycero-3-phosphate(in) = a 1,2-diacyl-sn-glycero-3-phosphate(out). Functionally, involved in the modulation of the mitochondrial apoptotic pathway by ensuring the accumulation of cardiolipin (CL) in mitochondrial membranes. The triap1:prelid1 complex probably functions as a phosphatidic acid (PA) transporter across the mitochondrion intermembrane space to provide PA for cardiolipin CL synthesis in the inner membrane. Likewise, the triap1:prelid3a complex mediates the transfer of phosphatidic acid (PA) between liposomes (in vitro) and probably functions as a PA transporter across the mitochondrion intermembrane space (in vivo). Mediates cell survival by inhibiting activation of caspase-9 which prevents induction of apoptosis. Required for pronephros development; probably involved at an early stage in the formation of pronephric components derived from the somatic layer. This chain is TP53-regulated inhibitor of apoptosis 1-A (triap1-a), found in Xenopus laevis (African clawed frog).